The sequence spans 105 residues: Nucleoid-associated protein EAT1b_1710 (105 aa).

Over residues 1 to 16 (MRGMGNMNNMMKQMQK) the composition is skewed to low complexity. Residues 1 to 26 (MRGMGNMNNMMKQMQKMQKDMAKAQE) are disordered. Positions 17 to 26 (MQKDMAKAQE) are enriched in basic and acidic residues.

This sequence belongs to the YbaB/EbfC family. In terms of assembly, homodimer.

The protein localises to the cytoplasm. The protein resides in the nucleoid. Its function is as follows. Binds to DNA and alters its conformation. May be involved in regulation of gene expression, nucleoid organization and DNA protection. The polypeptide is Nucleoid-associated protein EAT1b_1710 (Exiguobacterium sp. (strain ATCC BAA-1283 / AT1b)).